The primary structure comprises 121 residues: MNKQKGMTLLEVLVALAIFSLAGLTLLQTTAQQARNAGMMKEKMLASWLADNQQVRLHLNKLWPEKSATGALVTYAGEEWYLSWQGVDTEFSQLRALDIEVRRHKQDTAAIFSLRSYVVHE.

Residues 1-6 (MNKQKG) constitute a propeptide, leader sequence. Met-7 bears the N-methylmethionine mark. A helical membrane pass occupies residues 7–27 (MTLLEVLVALAIFSLAGLTLL).

This sequence belongs to the GSP I family. Type II secretion is composed of four main components: the outer membrane complex, the inner membrane complex, the cytoplasmic secretion ATPase and the periplasm-spanning pseudopilus. Interacts with core component PulG. Interacts with pseudopilins PulJ and PulK. Cleaved by prepilin peptidase. Post-translationally, methylated by prepilin peptidase at the amino group of the N-terminal methionine once the leader sequence is cleaved by prepilin peptidase.

It is found in the cell inner membrane. In terms of biological role, component of the type II secretion system required for the energy-dependent secretion of extracellular factors such as proteases and toxins from the periplasm. Part of the pseudopilus tip complex that is critical for the recognition and binding of secretion substrates. This chain is Type II secretion system protein I (pulI), found in Klebsiella michiganensis (strain ATCC 8724 / DSM 4798 / JCM 20051 / NBRC 3318 / NRRL B-199 / KCTC 1686 / BUCSAV 143 / CCM 1901).